The sequence spans 351 residues: Peptide chain release factor 1 (351 aa).

Position 229 is an N5-methylglutamine (Gln-229).

Belongs to the prokaryotic/mitochondrial release factor family. In terms of processing, methylated by PrmC. Methylation increases the termination efficiency of RF1.

It is found in the cytoplasm. In terms of biological role, peptide chain release factor 1 directs the termination of translation in response to the peptide chain termination codons UAG and UAA. The polypeptide is Peptide chain release factor 1 (Cereibacter sphaeroides (strain KD131 / KCTC 12085) (Rhodobacter sphaeroides)).